Here is a 33-residue protein sequence, read N- to C-terminus: Neurotoxin Nk-3FTx (33 aa).

Cystine bridges form between Cys3–Cys24 and Cys6–Cys11.

In terms of tissue distribution, expressed by the venom gland.

It localises to the secreted. In terms of biological role, possible voltage-gated potassium channel (Kv) blocker. Decreases amplitude of compound action potential and conduction velocity in toad sciatic nerve. Has only mild anticoagulant activity even at a concentration of 5ug/ml. Shows no cytotoxicity towards human cell lines. This is Neurotoxin Nk-3FTx from Naja kaouthia (Monocled cobra).